Consider the following 256-residue polypeptide: ATP synthase subunit a (256 aa).

The next 6 helical transmembrane spans lie at 33–53 (ITTFTVYSVFILIVILGLTLL), 92–112 (YFPLIYTFFIFIFTANLIGMI), 122–142 (MVFIISLSVVIWLGVTIIGLY), 148–168 (FFALFVPAGCPLALAPLLVLI), 191–211 (GHLLMVILGGLVFNLMSVSIV), and 235–255 (MIQSYVFAILASGYIKDGLYL).

Belongs to the ATPase A chain family. In terms of assembly, F-type ATPases have 2 components, CF(1) - the catalytic core - and CF(0) - the membrane proton channel. CF(1) has five subunits: alpha(3), beta(3), gamma(1), delta(1), epsilon(1). CF(0) has three main subunits: a, b and c.

The protein localises to the mitochondrion inner membrane. Its function is as follows. Mitochondrial membrane ATP synthase (F(1)F(0) ATP synthase or Complex V) produces ATP from ADP in the presence of a proton gradient across the membrane which is generated by electron transport complexes of the respiratory chain. F-type ATPases consist of two structural domains, F(1) - containing the extramembraneous catalytic core and F(0) - containing the membrane proton channel, linked together by a central stalk and a peripheral stalk. During catalysis, ATP synthesis in the catalytic domain of F(1) is coupled via a rotary mechanism of the central stalk subunits to proton translocation. Key component of the proton channel; it may play a direct role in the translocation of protons across the membrane. This Wickerhamomyces canadensis (Yeast) protein is ATP synthase subunit a (ATP6).